The primary structure comprises 505 residues: ATP synthase subunit beta, mitochondrial (505 aa).

Gly-184–Thr-191 provides a ligand contact to ATP.

It belongs to the ATPase alpha/beta chains family. In terms of assembly, F-type ATPases have 2 components, CF(1) - the catalytic core - and CF(0) - the membrane proton channel. CF(1) has five subunits: alpha(3), beta(3), gamma(1), delta(1), epsilon(1). CF(0) has three main subunits: a, b and c.

It localises to the mitochondrion. It is found in the mitochondrion inner membrane. The enzyme catalyses ATP + H2O + 4 H(+)(in) = ADP + phosphate + 5 H(+)(out). Mitochondrial membrane ATP synthase (F(1)F(0) ATP synthase or Complex V) produces ATP from ADP in the presence of a proton gradient across the membrane which is generated by electron transport complexes of the respiratory chain. F-type ATPases consist of two structural domains, F(1) - containing the extramembraneous catalytic core, and F(0) - containing the membrane proton channel, linked together by a central stalk and a peripheral stalk. During catalysis, ATP synthesis in the catalytic domain of F(1) is coupled via a rotary mechanism of the central stalk subunits to proton translocation. Subunits alpha and beta form the catalytic core in F(1). Rotation of the central stalk against the surrounding alpha(3)beta(3) subunits leads to hydrolysis of ATP in three separate catalytic sites on the beta subunits. The chain is ATP synthase subunit beta, mitochondrial (ATP2) from Kluyveromyces lactis (strain ATCC 8585 / CBS 2359 / DSM 70799 / NBRC 1267 / NRRL Y-1140 / WM37) (Yeast).